The primary structure comprises 374 residues: Alginate lyase (374 aa).

A signal peptide spans M1–A26. Substrate-binding positions include S67–K68, H140–T141, and Y258.

The protein belongs to the polysaccharide lyase 5 family.

It is found in the periplasm. The enzyme catalyses Eliminative cleavage of alginate to give oligosaccharides with 4-deoxy-alpha-L-erythro-hex-4-enuronosyl groups at their non-reducing ends and beta-D-mannuronate at their reducing end.. Functionally, catalyzes the depolymerization of alginate by cleaving the beta-1,4 glycosidic bond between two adjacent sugar residues via a beta-elimination mechanism. May serve to degrade mislocalized alginate that is trapped in the periplasmic space. The chain is Alginate lyase from Cobetia marina (Deleya marina).